A 472-amino-acid polypeptide reads, in one-letter code: Violaxanthin de-epoxidase, chloroplastic (472 aa).

6 disulfides stabilise this stretch: cysteine 133/cysteine 151, cysteine 138/cysteine 145, cysteine 157/cysteine 174, cysteine 161/cysteine 170, cysteine 189/cysteine 196, and cysteine 242/cysteine 372. A coiled-coil region spans residues valine 379 to phenylalanine 462.

The protein belongs to the calycin superfamily. Lipocalin family. Post-translationally, disulfide bonds. Reduction of the disulfides results in loss of a rigid structure, a decrease in thermal stability of 15 degrees Celsius and a loss of activity.

Its subcellular location is the plastid. It is found in the chloroplast thylakoid membrane. It carries out the reaction all-trans-violaxanthin + 2 L-ascorbate = all-trans-zeaxanthin + 2 L-dehydroascorbate + 2 H2O. Irreversibly inhibited by DTT and iodoacetamide at pH 5.7 or pH 5.2, but not at pH 7.2. Regulated through Ca(2+) gating of H(+) flux at the CFoH(+) channel. Requires the presence of lipids forming reverse hexagonal structures such as monogalactosyldiacylglyceride (MGDG) or phosphatidylethanolamine. A negative curvature elastic stress in the thylakoid lipid bilayer is required for VDE1 activity. Its function is as follows. Part of the xanthophyll (or violaxanthin) cycle for controlling the concentration of zeaxanthin in chloroplasts. Catalyzes the two-step mono de-epoxidation reaction. Stereospecific for all-trans xanthophylls. Zeaxanthin induces the dissipation of excitation energy in the chlorophyll of the light-harvesting protein complex of photosystem II. The chain is Violaxanthin de-epoxidase, chloroplastic from Spinacia oleracea (Spinach).